The primary structure comprises 84 residues: Small ribosomal subunit protein bS18A (84 aa).

Belongs to the bacterial ribosomal protein bS18 family. In terms of assembly, part of the 30S ribosomal subunit. Forms a tight heterodimer with protein bS6.

In terms of biological role, binds as a heterodimer with protein bS6 to the central domain of the 16S rRNA, where it helps stabilize the platform of the 30S subunit. The polypeptide is Small ribosomal subunit protein bS18A (Mycobacterium marinum (strain ATCC BAA-535 / M)).